The sequence spans 373 residues: Flagellar P-ring protein (373 aa).

Residues 1-26 form the signal peptide; it reads MKLFFRFLTLVAVLAMSLADVAPAWA.

It belongs to the FlgI family. As to quaternary structure, the basal body constitutes a major portion of the flagellar organelle and consists of four rings (L,P,S, and M) mounted on a central rod.

It localises to the periplasm. Its subcellular location is the bacterial flagellum basal body. Functionally, assembles around the rod to form the L-ring and probably protects the motor/basal body from shearing forces during rotation. This chain is Flagellar P-ring protein, found in Rhizobium leguminosarum bv. trifolii (strain WSM2304).